We begin with the raw amino-acid sequence, 142 residues long: Large ribosomal subunit protein uL13 (142 aa).

This sequence belongs to the universal ribosomal protein uL13 family. In terms of assembly, part of the 50S ribosomal subunit.

This protein is one of the early assembly proteins of the 50S ribosomal subunit, although it is not seen to bind rRNA by itself. It is important during the early stages of 50S assembly. In Alkaliphilus metalliredigens (strain QYMF), this protein is Large ribosomal subunit protein uL13.